Here is a 266-residue protein sequence, read N- to C-terminus: Vitamin B12-binding protein (266 aa).

The signal sequence occupies residues 1 to 22 (MAKQMFRALGALLLTLPVWLYA). One can recognise a Fe/B12 periplasmic-binding domain in the interval 25 to 266 (RVITLSPANT…QLCNALSQVN (242 aa)). Cyanocob(III)alamin-binding positions include Tyr-50 and 242–246 (DWFER). Cys-183 and Cys-259 form a disulfide bridge.

The protein belongs to the BtuF family. In terms of assembly, the complex is composed of two ATP-binding proteins (BtuD), two transmembrane proteins (BtuC) and a solute-binding protein (BtuF).

Its subcellular location is the periplasm. Functionally, part of the ABC transporter complex BtuCDF involved in vitamin B12 import. Binds vitamin B12 and delivers it to the periplasmic surface of BtuC. The polypeptide is Vitamin B12-binding protein (Salmonella typhi).